A 213-amino-acid polypeptide reads, in one-letter code: Histone H1.3 (213 aa).

Position 1 is an N-acetylserine (Ser-1). The span at 1–15 (SEAPAETAAPAPAEK) shows a compositional bias: low complexity. The tract at residues 1-41 (SEAPAETAAPAPAEKSPAKKKKAAKKPGAGAAKRKAAGPPV) is disordered. Lys-15 is modified (N6-acetyllysine). N6-(beta-hydroxybutyryl)lysine is present on residues Lys-35 and Lys-53. The H15 domain occupies 37–110 (AGPPVSELIT…GASGSFKLDK (74 aa)). Citrulline is present on Arg-55. N6-(beta-hydroxybutyryl)lysine is present on residues Lys-65, Lys-86, and Lys-91. The tract at residues 92 to 213 (GTLVETKGTG…AKKTAAKKKK (122 aa)) is disordered. Ser-105 is modified (phosphoserine). Lys-107 is modified (N6-(beta-hydroxybutyryl)lysine). The segment covering 107–119 (KLDKKAASGEAKP) has biased composition (basic and acidic residues). 3 stretches are compositionally biased toward basic residues: residues 120 to 131 (KPKKAGAAKPKK), 138 to 170 (KKPK…KVAK), and 179 to 213 (KSPK…KKKK).

Belongs to the histone H1/H5 family. Post-translationally, H1 histones are progressively phosphorylated during the cell cycle, becoming maximally phosphorylated during late G2 phase and M phase, and being dephosphorylated sharply thereafter. In terms of processing, citrullination at Arg-55 (H1R54ci) by PADI4 takes place within the DNA-binding site of H1 and results in its displacement from chromatin and global chromatin decondensation, thereby promoting pluripotency and stem cell maintenance.

Its subcellular location is the nucleus. The protein localises to the chromosome. Histones H1 are necessary for the condensation of nucleosome chains into higher-order structures. The sequence is that of Histone H1.3 from Oryctolagus cuniculus (Rabbit).